The chain runs to 158 residues: Cyclic pyranopterin monophosphate synthase (158 aa).

Residues 76 to 78 (LCH) and 114 to 115 (ME) each bind substrate. Aspartate 129 is a catalytic residue.

The protein belongs to the MoaC family. Homohexamer; trimer of dimers.

It catalyses the reaction (8S)-3',8-cyclo-7,8-dihydroguanosine 5'-triphosphate = cyclic pyranopterin phosphate + diphosphate. Its pathway is cofactor biosynthesis; molybdopterin biosynthesis. Catalyzes the conversion of (8S)-3',8-cyclo-7,8-dihydroguanosine 5'-triphosphate to cyclic pyranopterin monophosphate (cPMP). This Shewanella loihica (strain ATCC BAA-1088 / PV-4) protein is Cyclic pyranopterin monophosphate synthase.